Here is a 240-residue protein sequence, read N- to C-terminus: Ribosomal RNA small subunit methyltransferase G (240 aa).

Residues glycine 77, phenylalanine 82, 128–129 (AE), and arginine 148 contribute to the S-adenosyl-L-methionine site. Residues 217-240 (EKRSKTPKKYPRKAGTPNKSPLLK) are disordered.

Belongs to the methyltransferase superfamily. RNA methyltransferase RsmG family.

It is found in the cytoplasm. In terms of biological role, specifically methylates the N7 position of guanine in position 535 of 16S rRNA. This chain is Ribosomal RNA small subunit methyltransferase G, found in Staphylococcus carnosus (strain TM300).